Reading from the N-terminus, the 125-residue chain is N-alpha-acetyltransferase 38, NatC auxiliary subunit (125 aa).

Residues 1–42 (MAGAGPTMLLREENGCCSRRQSSSSAGDSDGEQEDSPATRAR) form a disordered region. Ala-2 is modified (N-acetylalanine). A compositionally biased stretch (low complexity) spans 18 to 28 (SRRQSSSSAGD). 3 positions are modified to phosphoserine: Ser-22, Ser-25, and Ser-29. The Sm domain maps to 40–118 (RARQQLEALL…IVSIEVQRES (79 aa)).

It belongs to the snRNP Sm proteins family. In terms of assembly, component of the N-terminal acetyltransferase C (NatC) complex, which is composed of NAA35, NAA38 and NAA30.

The protein resides in the cytoplasm. It localises to the nucleus. Auxillary component of the N-terminal acetyltransferase C (NatC) complex which catalyzes acetylation of N-terminal methionine residues. N-terminal acetylation protects proteins from ubiquitination and degradation by the N-end rule pathway. The polypeptide is N-alpha-acetyltransferase 38, NatC auxiliary subunit (Naa38) (Mus musculus (Mouse)).